The sequence spans 914 residues: Neutral alpha-glucosidase C (914 aa).

Catalysis depends on Asp511, which acts as the Nucleophile. The active site involves Glu514. Asp587 serves as the catalytic Proton donor.

This sequence belongs to the glycosyl hydrolase 31 family.

It carries out the reaction Hydrolysis of terminal, non-reducing (1-&gt;4)-linked alpha-D-glucose residues with release of alpha-D-glucose.. Functionally, has alpha-glucosidase activity. The chain is Neutral alpha-glucosidase C (GANC) from Homo sapiens (Human).